The primary structure comprises 200 residues: GTP-binding protein rho5 (200 aa).

13-20 (GDGACGKT) contributes to the GTP binding site. Residues 35–43 (YVPTVFENY) carry the Effector region motif. GTP is bound by residues 60–64 (DTAGQ) and 118–121 (CKVD). A Cysteine methyl ester modification is found at Cys197. A lipid anchor (S-geranylgeranyl cysteine) is attached at Cys197. The propeptide at 198–200 (ILL) is removed in mature form.

Belongs to the small GTPase superfamily. Rho family.

It is found in the cell membrane. The chain is GTP-binding protein rho5 (rho5) from Schizosaccharomyces pombe (strain 972 / ATCC 24843) (Fission yeast).